The primary structure comprises 570 residues: NADPH oxidase 2 (570 aa).

Topologically, residues 2–9 are cytoplasmic; that stretch reads GNWVVNEG. A helical membrane pass occupies residues 10–36; it reads ISIFVILVWLGMNVFLFVWYYRVYDIP. The Extracellular portion of the chain corresponds to 37 to 46; it reads DKFFYTRKLL. A helical membrane pass occupies residues 47–72; sequence GSALALARAPAACLNFNCMLILLPVC. One can recognise a Ferric oxidoreductase domain in the interval 54–286; it reads RAPAACLNFN…MFLYLCERLV (233 aa). Residues 73 to 95 are Cytoplasmic-facing; the sequence is RNLLSFLRGSSACCSTRIRRQLD. A helical transmembrane segment spans residues 96–130; it reads RNLTFHKMVAWMIALHTAIHTIAHLFNVEWCVNAR. The heme b site is built by His101 and His115. The Extracellular segment spans residues 131–163; sequence VNNSDPYSIALSDIGDKPNETYLNFVRQRIKNP. Residues Asn132 and Asn149 are each glycosylated (N-linked (GlcNAc...) asparagine). Residue Lys161 forms a Glycyl lysine isopeptide (Lys-Gly) (interchain with G-Cter in ubiquitin) linkage. Residues 164-194 traverse the membrane as a helical segment; sequence EGGLYVAVTRLAGITGVVITLCLILIITSST. At 195-203 the chain is on the cytoplasmic side; that stretch reads KTIRRSYFE. The FAD site is built by Arg199 and Ser200. Residues 204–222 form a helical membrane-spanning segment; sequence VFWYTHHLFVIFFIGLAIH. Heme b is bound by residues Trp206, His209, His222, Arg226, and Ile227. Topologically, residues 223 to 267 are extracellular; sequence GAQRIVRGQTAESLLKHQPRNCYQNISQWGKIENCPIPEFSGNPP. A glycan (N-linked (GlcNAc...) asparagine) is linked at Asn247. Heme b-binding residues include Met268, Tyr280, and Arg287. A helical membrane pass occupies residues 268 to 285; that stretch reads MTWKWIVGPMFLYLCERL. Residues 286-570 lie on the Cytoplasmic side of the membrane; it reads VRFWRSQQKV…VHFIFNKENF (285 aa). In terms of domain architecture, FAD-binding FR-type spans 287–397; sequence RFWRSQQKVV…DGPFGTASED (111 aa). Residues Lys294, Lys299, Lys306, Lys328, and Lys334 each participate in a glycyl lysine isopeptide (Lys-Gly) (interchain with G-Cter in ubiquitin) cross-link. Residues Trp337, His338, Pro339, Thr341, His354, Arg356, Trp361, and Thr362 each contribute to the FAD site. Lys381 participates in a covalent cross-link: Glycyl lysine isopeptide (Lys-Gly) (interchain with G-Cter in ubiquitin). Residues Ile411, Arg446, and Thr481 each coordinate NADPH. Lys506 is covalently cross-linked (Glycyl lysine isopeptide (Lys-Gly) (interchain with G-Cter in ubiquitin)). Position 513 (Arg513) interacts with NADPH. Lys567 participates in a covalent cross-link: Glycyl lysine isopeptide (Lys-Gly) (interchain with G-Cter in ubiquitin).

Component of the phagocyte NADPH oxidase core complex/cytochrome b558 complex, composed of CYBB (heavy chain (beta)) and CYBA (light chain (alpha)). Component of the phagocyte NADPH oxidase complex composed of an obligatory core heterodimer formed by the membrane proteins CYBA and CYBB and the cytosolic regulatory subunits NCF1/p47-phox, NCF2/p67-phox, NCF4/p40-phox and the small GTPase RAC1 or RAC2. Interacts with NCF1 (phosphorylated form). Interacts with NCF2; the interaction is enhanced in the presence of GBP7. Interacts with RAC2. Interacts with RAC1. Interacts with calprotectin (S100A8/9). Interacts with NRROS; the interaction is direct and impairs formation of a stable NADPH oxidase complex. Interacts with CYBC1; CYBC1 may act as a chaperone stabilizing Cytochrome b-245 heterodimer. The CYBA-CYBB complex interacts with GBP7. Requires FAD as cofactor. Post-translationally, glycosylated. Phosphorylated on Ser and Thr residues by PKC during neutrophils activation. Phosphorylation enhances the NADPH oxidase activity and stimulates its interaction with RAC2, NCF2/p67-phox, and NCF1/p47-phox. In terms of processing, undergoes 'Lys-48'-linked polyubiquitination, likely by RNF145, triggering endoplasmic reticulum-associated degradation.

It is found in the cell membrane. The catalysed reaction is NADPH + 2 O2 = 2 superoxide + NADP(+) + H(+). Functionally, catalytic subunit of the phagocyte NADPH oxidase complex that mediates the transfer of electrons from cytosolic NADPH to O2 to produce the superoxide anion (O2(-)). In the activated complex, electrons are first transferred from NADPH to flavin adenine dinucleotide (FAD) and subsequently transferred via two heme molecules to molecular oxygen, producing superoxide through an outer-sphere reaction. Activation of the NADPH oxidase complex is initiated by the assembly of cytosolic subunits of the NADPH oxidase complex with the core NADPH oxidase complex to form a complex at the plasma membrane or phagosomal membrane. This activation process is initiated by phosphorylation dependent binding of the cytosolic NCF1/p47-phox subunit to the C-terminus of CYBA/p22-phox. NADPH oxidase complex assembly is impaired through interaction with NRROS. This Bos taurus (Bovine) protein is NADPH oxidase 2.